Here is a 641-residue protein sequence, read N- to C-terminus: Phosphomethylpyrimidine synthase (641 aa).

Residues Asn-221, Met-250, Tyr-279, His-315, 335-337 (SRG), 376-379 (DGLR), and Glu-415 each bind substrate. A Zn(2+)-binding site is contributed by His-419. A substrate-binding site is contributed by Tyr-442. A Zn(2+)-binding site is contributed by His-483. Positions 563, 566, and 571 each coordinate [4Fe-4S] cluster.

The protein belongs to the ThiC family. In terms of assembly, homodimer. The cofactor is [4Fe-4S] cluster.

It catalyses the reaction 5-amino-1-(5-phospho-beta-D-ribosyl)imidazole + S-adenosyl-L-methionine = 4-amino-2-methyl-5-(phosphooxymethyl)pyrimidine + CO + 5'-deoxyadenosine + formate + L-methionine + 3 H(+). The protein operates within cofactor biosynthesis; thiamine diphosphate biosynthesis. In terms of biological role, catalyzes the synthesis of the hydroxymethylpyrimidine phosphate (HMP-P) moiety of thiamine from aminoimidazole ribotide (AIR) in a radical S-adenosyl-L-methionine (SAM)-dependent reaction. The protein is Phosphomethylpyrimidine synthase of Rhodopseudomonas palustris (strain BisA53).